Here is a 239-residue protein sequence, read N- to C-terminus: Protein GUCD1 (239 aa).

The protein is Protein GUCD1 (Gucd1) of Mus musculus (Mouse).